The following is a 768-amino-acid chain: Transferrin receptor protein 1 (768 aa).

Topologically, residues 1-68 are cytoplasmic; the sequence is MMDQARSAFS…VAKPKRLNGY (68 aa). The mediates interaction with SH3BP4 stretch occupies residues 1–70; that stretch reads MMDQARSAFS…KPKRLNGYVC (70 aa). Phosphoserine is present on residues S10 and S19. Phosphotyrosine is present on Y20. Positions 20–23 match the Endocytosis signal motif; the sequence is YTRF. Position 21 is a phosphothreonine (T21). S24 carries the phosphoserine modification. The Stop-transfer sequence motif lies at 61 to 64; it reads KPKR. A helical transmembrane segment spans residues 69 to 89; the sequence is VCYGIIAVITFFLIGFMIGYL. C70 carries the S-palmitoyl cysteine lipid modification. Over 90-768 the chain is Extracellular; that stretch reads AYCKRVESKT…GDIWDIDNEF (679 aa). Positions 231 to 321 constitute a PA domain; the sequence is SKATTVTGKL…GTGDPYTPGF (91 aa). N259 and N325 each carry an N-linked (GlcNAc...) asparagine glycan. The tract at residues 577–768 is ligand-binding; sequence TMDTYDVLSK…GDIWDIDNEF (192 aa). Residues 654-656 carry the Cell attachment site motif; the sequence is RGD. N-linked (GlcNAc...) asparagine glycans are attached at residues N730 and N735.

The protein belongs to the peptidase M28 family. M28B subfamily. As to quaternary structure, homodimer; disulfide-linked. Binds one transferrin or HFE molecule per subunit. Interacts with SH3BP4. Interacts with SH3BP3. Interacts with STEAP3; facilitates TFRC endocytosis in erythroid precursor cells. Post-translationally, stearoylated by ZDHHC6 which inhibits TFRC-mediated activation of the JNK pathway and promotes mitochondrial fragmentation. Stearoylation does not affect iron uptake.

Its subcellular location is the cell membrane. It is found in the melanosome. Its function is as follows. Cellular uptake of iron occurs via receptor-mediated endocytosis of ligand-occupied transferrin receptor into specialized endosomes. Endosomal acidification leads to iron release. The apotransferrin-receptor complex is then recycled to the cell surface with a return to neutral pH and the concomitant loss of affinity of apotransferrin for its receptor. Transferrin receptor is necessary for development of erythrocytes and the nervous system. Positively regulates T and B cell proliferation through iron uptake. Acts as a lipid sensor that regulates mitochondrial fusion by regulating activation of the JNK pathway. When dietary levels of stearate (C18:0) are low, promotes activation of the JNK pathway, resulting in HUWE1-mediated ubiquitination and subsequent degradation of the mitofusin MFN2 and inhibition of mitochondrial fusion. When dietary levels of stearate (C18:0) are high, TFRC stearoylation inhibits activation of the JNK pathway and thus degradation of the mitofusin MFN2. Mediates uptake of NICOL1 into fibroblasts where it may regulate extracellular matrix production. In Sus scrofa (Pig), this protein is Transferrin receptor protein 1 (TFRC).